Here is a 77-residue protein sequence, read N- to C-terminus: Exodeoxyribonuclease 7 small subunit (77 aa).

This sequence belongs to the XseB family. In terms of assembly, heterooligomer composed of large and small subunits.

It is found in the cytoplasm. The enzyme catalyses Exonucleolytic cleavage in either 5'- to 3'- or 3'- to 5'-direction to yield nucleoside 5'-phosphates.. In terms of biological role, bidirectionally degrades single-stranded DNA into large acid-insoluble oligonucleotides, which are then degraded further into small acid-soluble oligonucleotides. In Clostridium acetobutylicum (strain ATCC 824 / DSM 792 / JCM 1419 / IAM 19013 / LMG 5710 / NBRC 13948 / NRRL B-527 / VKM B-1787 / 2291 / W), this protein is Exodeoxyribonuclease 7 small subunit.